Consider the following 1372-residue polypeptide: DNA-directed RNA polymerase subunit beta (1372 aa).

It belongs to the RNA polymerase beta chain family. As to quaternary structure, the RNAP catalytic core consists of 2 alpha, 1 beta, 1 beta' and 1 omega subunit. When a sigma factor is associated with the core the holoenzyme is formed, which can initiate transcription.

It carries out the reaction RNA(n) + a ribonucleoside 5'-triphosphate = RNA(n+1) + diphosphate. DNA-dependent RNA polymerase catalyzes the transcription of DNA into RNA using the four ribonucleoside triphosphates as substrates. The polypeptide is DNA-directed RNA polymerase subunit beta (Psychrobacter cryohalolentis (strain ATCC BAA-1226 / DSM 17306 / VKM B-2378 / K5)).